The following is a 413-amino-acid chain: ATP-dependent RNA helicase RhlB (413 aa).

The short motif at Q9 to A37 is the Q motif element. In terms of domain architecture, Helicase ATP-binding spans L40–I217. A53–T60 contributes to the ATP binding site. A DEAD box motif is present at residues D163 to D166. The Helicase C-terminal domain occupies K241–I388.

Belongs to the DEAD box helicase family. RhlB subfamily. In terms of assembly, component of the RNA degradosome, which is a multiprotein complex involved in RNA processing and mRNA degradation.

The protein resides in the cytoplasm. The enzyme catalyses ATP + H2O = ADP + phosphate + H(+). DEAD-box RNA helicase involved in RNA degradation. Has RNA-dependent ATPase activity and unwinds double-stranded RNA. The polypeptide is ATP-dependent RNA helicase RhlB (Actinobacillus succinogenes (strain ATCC 55618 / DSM 22257 / CCUG 43843 / 130Z)).